Here is a 507-residue protein sequence, read N- to C-terminus: Subtilisin-like protease 1 (507 aa).

Residues 1–19 (MGVFRFISISLAAVSAANA) form the signal peptide. A propeptide spanning residues 20–116 (AQILSMPHAQ…VEPDTIISVN (97 aa)) is cleaved from the precursor. The Inhibitor I9 domain maps to 34 to 113 (SYIVMMKDDT…VMFVEPDTII (80 aa)). Residues 126–400 (SWGLARISNS…NVLISNGGAK (275 aa)) enclose the Peptidase S8 domain. Active-site charge relay system residues include Asp-158 and His-190. A disordered region spans residues 175-198 (GSNQVNDGDDRDGSGHGTHTSGTM). An N-linked (GlcNAc...) asparagine glycan is attached at Asn-251. Residues 282–294 (NENQDARSSSPAS) are compositionally biased toward polar residues. The tract at residues 282-312 (NENQDARSSSPASEPSVCTVGSSAEDDSRSS) is disordered. The active-site Charge relay system is Ser-345. Positions 378 to 394 (SSSITDVGPGTPTNVLI) are enriched in polar residues. The segment at 378–486 (SSSITDVGPG…YPGGDNFDFD (109 aa)) is disordered. Pro residues-rich tracts occupy residues 405–428 (KPAP…PSQP) and 438–449 (EPFPGEPFPGEP). A compositionally biased stretch (low complexity) spans 450–461 (FPGESSPGESAP). A compositionally biased stretch (pro residues) spans 462–476 (APAPMPPSPQHPHTP).

Belongs to the peptidase S8 family.

It is found in the secreted. Functionally, secreted subtilisin-like serine protease with keratinolytic activity that contributes to pathogenicity. This is Subtilisin-like protease 1 (SUB1) from Trichophyton equinum (Horse ringworm fungus).